The following is a 122-amino-acid chain: Lycotoxin-Pa4a (122 aa).

Positions 1–20 (MKLGIFFSVFFLAMIHSCLS) are cleaved as a signal peptide. A propeptide spanning residues 21-47 (ETNEDKNLESYFREDDLKALSFGEYAR) is cleaved from the precursor. 4 cysteine pairs are disulfide-bonded: cysteine 58–cysteine 73, cysteine 65–cysteine 82, cysteine 72–cysteine 100, and cysteine 84–cysteine 98.

It belongs to the neurotoxin 19 (CSTX) family. In terms of tissue distribution, expressed by the venom gland.

The protein localises to the secreted. It is found in the target cell membrane. Functionally, potent antibacterial peptide with anti-inflammatory properties. Inhibits both Gram-negative and Gram-positive bacteria by disrupting both the outer membrane and the cytosolic membrane of bacteria. Also downregulates the expression of pro-inflammatory mediators (cyclooxygenase-2 (PTGS2/COX2), nitric oxide-induced synthase (NOS2), IL-1 beta (IL1B), TNF-alpha (TNF)) and upregulates the level of anti-inflammatory cytokine (IL10) by inactivating mitogen-activated protein kinase signaling in a lipopolysaccharide-stimulated murine macrophage cell line. The chain is Lycotoxin-Pa4a from Pardosa astrigera (Wolf spider).